We begin with the raw amino-acid sequence, 333 residues long: Alpha-N-acetylgalactosaminide alpha-2,6-sialyltransferase 6 (333 aa).

Residues 1-12 (MACSRPPSQCEP) are compositionally biased toward polar residues. The interval 1-26 (MACSRPPSQCEPTSLPPGPPAGRRHL) is disordered. Residues 1 to 43 (MACSRPPSQCEPTSLPPGPPAGRRHLPLSRRRREMSSNKEQRS) lie on the Cytoplasmic side of the membrane. The helical; Signal-anchor for type II membrane protein transmembrane segment at 44–64 (AVFVILFALITILILYSSNSA) threads the bilayer. The Lumenal portion of the chain corresponds to 65–333 (NEVFHYGSLR…GITFSHPSWT (269 aa)). An N-linked (GlcNAc...) asparagine glycan is attached at Asn-98. The cysteines at positions 108 and 256 are disulfide-linked.

Belongs to the glycosyltransferase 29 family. As to expression, expressed in kidney, in proximal tubule epithelial cells. Expressed in colon cell lines.

It localises to the golgi apparatus membrane. It carries out the reaction a ganglioside GM1b (d18:1(4E)) + CMP-N-acetyl-beta-neuraminate = a ganglioside GD1alpha (d18:1(4E)) + CMP + H(+). The catalysed reaction is N-acetyl-alpha-neuraminosyl-(2-&gt;3)-beta-D-galactosyl-(1-&gt;3)-N-acetyl-beta-D-glucosaminyl-(1-&gt;3)-beta-D-galactosyl-(1-&gt;4)-beta-D-glucosyl-(1&lt;-&gt;1')-N-acyl-sphing-4-enine + CMP-N-acetyl-beta-neuraminate = N-acetyl-alpha-neuraminosyl-(2-&gt;3)-beta-D-galactosyl-(1-&gt;3)-[N-acetyl-alpha-neuraminosyl-(2-&gt;6)]-N-acetyl-beta-D-glucosaminyl-(1-&gt;3)-beta-D-galactosyl-(1-&gt;4)-beta-D-glucosyl-(1&lt;-&gt;1')-N-acyl-sphing-4-enine + CMP + H(+). It catalyses the reaction a globoside MSGG + CMP-N-acetyl-beta-neuraminate = a globoside DSGG + CMP + H(+). The enzyme catalyses a ganglioside GD1a (d18:1(4E)) + CMP-N-acetyl-beta-neuraminate = a ganglioside GT1aalpha (d18:1(4E)) + CMP + H(+). It carries out the reaction a ganglioside GT1b (d18:1(4E)) + CMP-N-acetyl-beta-neuraminate = a ganglioside GQ1balpha (d18:1(4E)) + CMP + H(+). The catalysed reaction is 3-O-[alpha-Neu5Ac-(2-&gt;3)-beta-D-Gal-(1-&gt;3)-alpha-D-GalNAc]-L-Ser-[protein] + CMP-N-acetyl-beta-neuraminate = a 3-O-{alpha-Neu5Ac-(2-&gt;3)-beta-D-Gal-(1-&gt;3)-[alpha-Neu5Ac-(2-&gt;6)]-alpha-D-GalNAc}-L-seryl-[protein] + CMP + H(+). It catalyses the reaction 3-O-[alpha-Neu5Ac-(2-&gt;3)-beta-D-Gal-(1-&gt;3)-alpha-D-GalNAc]-L-Thr-[protein] + CMP-N-acetyl-beta-neuraminate = a 3-O-{alpha-Neu5Ac-(2-&gt;3)-beta-D-Gal-(1-&gt;3)-[alpha-Neu5Ac-(2-&gt;6)]-alpha-D-GalNAc}-L-threonyl-[protein] + CMP + H(+). Its function is as follows. Transfers the sialyl group (N-acetyl-alpha-neuraminyl or NeuAc) from CMP-NeuAc onto glycoproteins and glycolipids, forming an alpha-2,6-linkage. Produces branched type disialyl structures by transfer of a sialyl group onto the GalNAc or GlcNAc residue inside backbone core chains having a terminal sialic acid with an alpha-2,3-linkage on Gal. ST6GalNAcVI prefers glycolipids to glycoproteins, predominantly catalyzing the biosynthesis of ganglioside GD1alpha from GM1b. Besides GMb1, MSGG and other glycolipids, it shows activity towards sialyl Lc4Cer generating disialyl Lc4Cer, which can lead to the synthesis of disialyl Lewis a (Le(a)), suggested to be a cancer-associated antigen. Also has activity toward GD1a and GT1b, and can generate DSGG (disialylgalactosylgloboside) from MSGG (monosialylgalactosylgloboside). The protein is Alpha-N-acetylgalactosaminide alpha-2,6-sialyltransferase 6 (ST6GALNAC6) of Homo sapiens (Human).